Here is a 106-residue protein sequence, read N- to C-terminus: uncharacterized protein (106 aa).

Residues 1–6 (MYQTSP) lie on the Cytoplasmic side of the membrane. Residues 7–27 (LSLFYFQVLVPKFLECFLCFP) traverse the membrane as a helical segment. The Extracellular segment spans residues 28 to 32 (YHKIS). The chain crosses the membrane as a helical span at residues 33 to 53 (LVALLSFFYCQLQTNMIILLS). Residues 54–73 (QIKRFLYRQIMIALKIKAKK) are Cytoplasmic-facing. The chain crosses the membrane as a helical span at residues 74 to 94 (FWFIFKYFNVSCDARLFNELF). Over 95-106 (YIFQTYVSVDSK) the chain is Extracellular.

It is found in the membrane. This is an uncharacterized protein from Saccharomyces cerevisiae (strain ATCC 204508 / S288c) (Baker's yeast).